The following is a 556-amino-acid chain: Beta-caryophyllene synthase TPS9FN (556 aa).

The (2E,6E)-farnesyl diphosphate site is built by Arg-273, Asp-310, Asp-314, Arg-451, and Asp-454. Mg(2+)-binding residues include Asp-310 and Asp-314. The DDXXD motif motif lies at 310–314 (DDIYD). Residues Asp-454, Ser-458, and Glu-462 each coordinate Mg(2+).

The protein belongs to the terpene synthase family. Tpsb subfamily. It depends on Mg(2+) as a cofactor. Requires Mn(2+) as cofactor. Expressed in glandular trichomes two to four weeks after flowering onset.

It catalyses the reaction (2E,6E)-farnesyl diphosphate = (-)-(E)-beta-caryophyllene + diphosphate. The enzyme catalyses (2E,6E)-farnesyl diphosphate = alpha-humulene + diphosphate. It functions in the pathway secondary metabolite biosynthesis; terpenoid biosynthesis. In terms of biological role, involved in sesquiterpene olefins biosynthesis, constituants of cannabinoids and terpenoids-rich resins. Catalyzes mainly the conversion of (2E)-farnesyl diphosphate to beta-caryophyllene and alpha-humulene. Can also use (2E)-geranyl diphosphate as substrate with low efficiency. The chain is Beta-caryophyllene synthase TPS9FN from Cannabis sativa (Hemp).